The following is a 465-amino-acid chain: Nuclear pore complex protein NUP50B (465 aa).

Disordered regions lie at residues 1–44 and 59–244; these read MGDS…TFNT and RRTD…FHQH. Gly-2 carries the post-translational modification N-acetylglycine. Acidic residues predominate over residues 26-35; it reads GLDDDDEDTS. Residues 81–97 are compositionally biased toward low complexity; the sequence is PFTAPAPSTAAAETTKP. Composition is skewed to basic and acidic residues over residues 105-127, 141-157, and 216-233; these read TLAD…KSDA, ISAK…KEMS, and TEKE…EKNG. The residue at position 125 (Ser-125) is a Phosphoserine. Tandem repeats lie at residues 266–267, 286–287, and 297–298. The 3 X 2 AA repeats of F-G stretch occupies residues 266 to 298; that stretch reads FGLVPQEGSTGSGSEQSSFSFGQANNGNSSLFG. Disordered stretches follow at residues 308–330 and 439–465; these read KSTE…GEEN and HKDS…AEDA. Thr-455 is subject to Phosphothreonine. Positions 456–465 are enriched in polar residues; sequence PENSPSAEDA. Position 459 is a phosphoserine (Ser-459).

As to quaternary structure, part of the nuclear pore complex (NPC). The NPC has an eight-fold symmetrical structure comprising a central transport channel and two rings, the cytoplasmic and nuclear rings, to which eight filaments are attached. The cytoplasmic filaments have loose ends, while the nuclear filaments are joined in a distal ring, forming a nuclear basket. NPCs are highly dynamic in configuration and composition, and can be devided in 3 subcomplexes, the NUP62 subcomplex, the NUP107-160 subcomplex and the NUP93 subcomplex, containing approximately 30 different nucleoporin proteins.

The protein localises to the nucleus. It is found in the nucleoplasm. The protein resides in the nuclear pore complex. In terms of biological role, probably involved in nucleocytoplasmic transport via its interactions with importins and Ran, rather than by forming part of the nuclear pore complex (NPC) scaffolding. The chain is Nuclear pore complex protein NUP50B from Arabidopsis thaliana (Mouse-ear cress).